The primary structure comprises 193 residues: DNA damage-inducible transcript 4-like protein (193 aa).

The protein belongs to the DDIT4 family.

It localises to the cytoplasm. Inhibits cell growth by regulating the TOR signaling pathway upstream of the TSC1-TSC2 complex and downstream of AKT1. The chain is DNA damage-inducible transcript 4-like protein (DDIT4L) from Pongo abelii (Sumatran orangutan).